A 488-amino-acid polypeptide reads, in one-letter code: (S)-N-methylcoclaurine 3'-hydroxylase isozyme 2 (488 aa).

The chain crosses the membrane as a helical span at residues 3–23 (VVTVALIAVIISSILYLLFGS). Residue C430 participates in heme binding.

Belongs to the cytochrome P450 family. Heme is required as a cofactor.

Its subcellular location is the endoplasmic reticulum membrane. The protein localises to the microsome membrane. It carries out the reaction (S)-N-methylcoclaurine + reduced [NADPH--hemoprotein reductase] + O2 = (S)-3'-hydroxy-N-methylcoclaurine + oxidized [NADPH--hemoprotein reductase] + H2O + H(+). It participates in alkaloid biosynthesis; (S)-reticuline biosynthesis; (S)-reticuline from (S)-norcoclaurine: step 3/4. In terms of biological role, 3'-hydroxylation of (S)-N-methylcoclaurine. This is (S)-N-methylcoclaurine 3'-hydroxylase isozyme 2 (CYP80B2) from Eschscholzia californica (California poppy).